Here is a 197-residue protein sequence, read N- to C-terminus: dTTP/UTP pyrophosphatase (197 aa).

Residue Asp70 is the Proton acceptor of the active site.

This sequence belongs to the Maf family. YhdE subfamily. The cofactor is a divalent metal cation.

It is found in the cytoplasm. It carries out the reaction dTTP + H2O = dTMP + diphosphate + H(+). The catalysed reaction is UTP + H2O = UMP + diphosphate + H(+). Its function is as follows. Nucleoside triphosphate pyrophosphatase that hydrolyzes dTTP and UTP. May have a dual role in cell division arrest and in preventing the incorporation of modified nucleotides into cellular nucleic acids. This chain is dTTP/UTP pyrophosphatase (yhdE), found in Escherichia coli O157:H7.